A 415-amino-acid polypeptide reads, in one-letter code: L-threonine dehydratase biosynthetic IlvA (415 aa).

Residue Lys-53 is modified to N6-(pyridoxal phosphate)lysine. Pyridoxal 5'-phosphate is bound by residues Asn-80, 183 to 187 (GGGGL), and Ser-308. The 75-residue stretch at 332–406 (HYFIIQFPQR…KGFEYREINK (75 aa)) folds into the ACT-like domain.

This sequence belongs to the serine/threonine dehydratase family. In terms of assembly, homotetramer. Pyridoxal 5'-phosphate is required as a cofactor.

The enzyme catalyses L-threonine = 2-oxobutanoate + NH4(+). It functions in the pathway amino-acid biosynthesis; L-isoleucine biosynthesis; 2-oxobutanoate from L-threonine: step 1/1. Catalyzes the anaerobic formation of alpha-ketobutyrate and ammonia from threonine in a two-step reaction. The first step involved a dehydration of threonine and a production of enamine intermediates (aminocrotonate), which tautomerizes to its imine form (iminobutyrate). Both intermediates are unstable and short-lived. The second step is the nonenzymatic hydrolysis of the enamine/imine intermediates to form 2-ketobutyrate and free ammonia. In the low water environment of the cell, the second step is accelerated by RidA. The chain is L-threonine dehydratase biosynthetic IlvA (ilvA) from Halalkalibacterium halodurans (strain ATCC BAA-125 / DSM 18197 / FERM 7344 / JCM 9153 / C-125) (Bacillus halodurans).